A 143-amino-acid chain; its full sequence is ATP synthase subunit b' (143 aa).

The helical transmembrane segment at 6–26 (ATLPVMALQFILLAVILNAVF) threads the bilayer.

The protein belongs to the ATPase B chain family. As to quaternary structure, F-type ATPases have 2 components, F(1) - the catalytic core - and F(0) - the membrane proton channel. F(1) has five subunits: alpha(3), beta(3), gamma(1), delta(1), epsilon(1). F(0) has four main subunits: a(1), b(1), b'(1) and c(10-14). The alpha and beta chains form an alternating ring which encloses part of the gamma chain. F(1) is attached to F(0) by a central stalk formed by the gamma and epsilon chains, while a peripheral stalk is formed by the delta, b and b' chains.

The protein localises to the cellular thylakoid membrane. In terms of biological role, f(1)F(0) ATP synthase produces ATP from ADP in the presence of a proton or sodium gradient. F-type ATPases consist of two structural domains, F(1) containing the extramembraneous catalytic core and F(0) containing the membrane proton channel, linked together by a central stalk and a peripheral stalk. During catalysis, ATP synthesis in the catalytic domain of F(1) is coupled via a rotary mechanism of the central stalk subunits to proton translocation. Functionally, component of the F(0) channel, it forms part of the peripheral stalk, linking F(1) to F(0). The b'-subunit is a diverged and duplicated form of b found in plants and photosynthetic bacteria. This is ATP synthase subunit b' from Microcystis aeruginosa (strain NIES-843 / IAM M-2473).